The following is a 486-amino-acid chain: Aspartyl/glutamyl-tRNA(Asn/Gln) amidotransferase subunit B (486 aa).

Belongs to the GatB/GatE family. GatB subfamily. In terms of assembly, heterotrimer of A, B and C subunits.

The enzyme catalyses L-glutamyl-tRNA(Gln) + L-glutamine + ATP + H2O = L-glutaminyl-tRNA(Gln) + L-glutamate + ADP + phosphate + H(+). The catalysed reaction is L-aspartyl-tRNA(Asn) + L-glutamine + ATP + H2O = L-asparaginyl-tRNA(Asn) + L-glutamate + ADP + phosphate + 2 H(+). In terms of biological role, allows the formation of correctly charged Asn-tRNA(Asn) or Gln-tRNA(Gln) through the transamidation of misacylated Asp-tRNA(Asn) or Glu-tRNA(Gln) in organisms which lack either or both of asparaginyl-tRNA or glutaminyl-tRNA synthetases. The reaction takes place in the presence of glutamine and ATP through an activated phospho-Asp-tRNA(Asn) or phospho-Glu-tRNA(Gln). The protein is Aspartyl/glutamyl-tRNA(Asn/Gln) amidotransferase subunit B of Azoarcus sp. (strain BH72).